Consider the following 241-residue polypeptide: tRNA (guanine-N(1)-)-methyltransferase (241 aa).

Residues glycine 112 and 131–136 (LGDFVL) contribute to the S-adenosyl-L-methionine site.

The protein belongs to the RNA methyltransferase TrmD family. As to quaternary structure, homodimer.

Its subcellular location is the cytoplasm. The enzyme catalyses guanosine(37) in tRNA + S-adenosyl-L-methionine = N(1)-methylguanosine(37) in tRNA + S-adenosyl-L-homocysteine + H(+). In terms of biological role, specifically methylates guanosine-37 in various tRNAs. This chain is tRNA (guanine-N(1)-)-methyltransferase, found in Clostridium novyi (strain NT).